The primary structure comprises 392 residues: Histidinol-phosphate aminotransferase 2 (392 aa).

K228 is modified (N6-(pyridoxal phosphate)lysine).

Belongs to the class-II pyridoxal-phosphate-dependent aminotransferase family. Histidinol-phosphate aminotransferase subfamily. Homodimer. It depends on pyridoxal 5'-phosphate as a cofactor.

It catalyses the reaction L-histidinol phosphate + 2-oxoglutarate = 3-(imidazol-4-yl)-2-oxopropyl phosphate + L-glutamate. It functions in the pathway amino-acid biosynthesis; L-histidine biosynthesis; L-histidine from 5-phospho-alpha-D-ribose 1-diphosphate: step 7/9. This chain is Histidinol-phosphate aminotransferase 2, found in Nitrosospira multiformis (strain ATCC 25196 / NCIMB 11849 / C 71).